The sequence spans 189 residues: Auxin-induced protein IAA4 (189 aa).

Residues 8–12 carry the EAR-like (transcriptional repression) motif; sequence LRLGL. Residues 92-179 form the PB1 domain; sequence GIFVKVSMDG…SCKRLRIMKG (88 aa).

The protein belongs to the Aux/IAA family. In terms of assembly, homodimers and heterodimers. Post-translationally, phosphorylated by phytochrome A in vitro.

It is found in the nucleus. Its function is as follows. Aux/IAA proteins are short-lived transcriptional factors that function as repressors of early auxin response genes at low auxin concentrations. Repression is thought to result from the interaction with auxin response factors (ARFs), proteins that bind to the auxin-responsive promoter element (AuxRE). Formation of heterodimers with ARF proteins may alter their ability to modulate early auxin response genes expression. In Pisum sativum (Garden pea), this protein is Auxin-induced protein IAA4 (IAA4/5).